A 289-amino-acid polypeptide reads, in one-letter code: Phytoene synthase (289 aa).

Belongs to the phytoene/squalene synthase family. It depends on ATP as a cofactor. Requires Mn(2+) as cofactor. Mg(2+) is required as a cofactor.

It functions in the pathway carotenoid biosynthesis; phytoene biosynthesis. Involved in the biosynthesis of carotenoids. Catalyzes the condensation of two molecules of geranylgeranyl diphosphate (GGPP) to give prephytoene diphosphate (PPPP) and the subsequent rearrangement of the cyclopropylcarbinyl intermediate to yield phytoene. This chain is Phytoene synthase (crtB), found in Thermus thermophilus (strain ATCC BAA-163 / DSM 7039 / HB27).